The primary structure comprises 443 residues: Transcription factor E2F2 (443 aa).

The tract at residues 1–22 is disordered; the sequence is MLRAPRTLAPATAQPTKSLPAL. Positions 67–107 are cyclin A/CDK2 binding; sequence ATPHGPEGQIVRCAPAGRLPAKRKLDLEGIGRPTVPEFRTP. The DNA-binding element occupies 109 to 198; that stretch reads GKCIRVDGLP…KNNIQWVGRE (90 aa). Residues 157–178 form a leucine-zipper region; sequence LNWAAEVLDVQKRRIYDITNVL. Residues 162–198 carry the DEF box motif; that stretch reads EVLDVQKRRIYDITNVLEGIQLIRKKSKNNIQWVGRE. The dimerization stretch occupies residues 199-291; that stretch reads LFEDPTRPSR…PDRAEENLQI (93 aa). The tract at residues 306-341 is disordered; sequence PEEGQEPDSPAKEALPSTSALSPIPDCAQPGCSTDS. Residues 361–443 form a transactivation region; sequence PPPPLPPAPS…SYDLGDLLIN (83 aa). The retinoblastoma protein binding stretch occupies residues 416 to 433; it reads DEYLWGMDEGEGISDLFD.

This sequence belongs to the E2F/DP family. Component of the DRTF1/E2F transcription factor complex. Forms heterodimers with DP family members. The E2F2 complex binds specifically hypophosphorylated retinoblastoma protein RB1. During the cell cycle, RB1 becomes phosphorylated in mid-to-late G1 phase, detaches from the DRTF1/E2F complex, rendering E2F transcriptionally active. Viral oncoproteins, notably E1A, T-antigen and HPV E7, are capable of sequestering RB protein, thus releasing the active complex. Binds EAPP. In terms of processing, phosphorylated by CDK2 and cyclin A-CDK2 in the S-phase.

It is found in the nucleus. Functionally, transcription activator that binds DNA cooperatively with DP proteins through the E2 recognition site, 5'-TTTC[CG]CGC-3' found in the promoter region of a number of genes whose products are involved in cell cycle regulation or in DNA replication. The DRTF1/E2F complex functions in the control of cell-cycle progression from g1 to s phase. E2F2 binds specifically to RB1 in a cell-cycle dependent manner. This chain is Transcription factor E2F2 (E2f2), found in Mus musculus (Mouse).